A 375-amino-acid chain; its full sequence is MCGDQEGVSVAHKASEEIGARPVRGRQGRILRRAGLAVSLGITAMLVSGCSIDNVWLRFGWPSGVTPQATRMRELWTWSIIAALAMGVLVWGLTFWTVVFHRKKKDSPEFPRQTGYNVPLELTYTAIPFVIIAVLFYFTVVVQNYVHEKVADPDVTVDVTAFQWNWKFGYREVDFKDGGYQFNGIDTAREEAAQAQLKEYEERVDTEHGHPQPGPVHGKPENDILSYLHYDTVETVGTSTEIPVLVLPTGKVIEFQLAAADVIHAFWVPEFLFKRDVMPNPKENHSDNVFQITEIEKEGAFVGRCAEMCGTYHSMMNFEVRAVSPEKFTRYLDERRAGKTNAEALAAIGESPVATSTRPFNTDRTVKSAAAPEAE.

Transmembrane regions (helical) follow at residues 36-56, 80-100, and 122-142; these read LAVS…DNVW, IIAA…TVVF, and LTYT…TVVV. Positions 264, 305, 309, and 313 each coordinate Cu cation. Residues 353 to 363 show a composition bias toward polar residues; sequence VATSTRPFNTD. Residues 353–375 are disordered; it reads VATSTRPFNTDRTVKSAAAPEAE.

It belongs to the cytochrome c oxidase subunit 2 family. Requires Cu cation as cofactor. Heme is required as a cofactor.

The protein resides in the cell membrane. The catalysed reaction is 4 Fe(II)-[cytochrome c] + O2 + 8 H(+)(in) = 4 Fe(III)-[cytochrome c] + 2 H2O + 4 H(+)(out). In terms of biological role, subunits I and II form the functional core of the enzyme complex. Electrons originating in cytochrome c are transferred via heme a and Cu(A) to the binuclear center formed by heme a3 and Cu(B). The sequence is that of Probable cytochrome c oxidase subunit 2 (ctaC) from Nocardia farcinica (strain IFM 10152).